The sequence spans 124 residues: Small ribosomal subunit protein bS6 (124 aa).

The interval 101–124 (IMMKEVQREEARKSAQSDAPAVAA) is disordered. Residues 105–115 (EVQREEARKSA) show a composition bias toward basic and acidic residues.

It belongs to the bacterial ribosomal protein bS6 family.

Binds together with bS18 to 16S ribosomal RNA. The chain is Small ribosomal subunit protein bS6 from Polynucleobacter asymbioticus (strain DSM 18221 / CIP 109841 / QLW-P1DMWA-1) (Polynucleobacter necessarius subsp. asymbioticus).